The sequence spans 84 residues: DNA-directed RNA polymerase subunit Rpo5 (84 aa).

The protein belongs to the archaeal Rpo5/eukaryotic RPB5 RNA polymerase subunit family. In terms of assembly, part of the RNA polymerase complex.

The protein localises to the cytoplasm. The catalysed reaction is RNA(n) + a ribonucleoside 5'-triphosphate = RNA(n+1) + diphosphate. Its function is as follows. DNA-dependent RNA polymerase (RNAP) catalyzes the transcription of DNA into RNA using the four ribonucleoside triphosphates as substrates. The sequence is that of DNA-directed RNA polymerase subunit Rpo5 from Saccharolobus islandicus (strain Y.N.15.51 / Yellowstone #2) (Sulfolobus islandicus).